We begin with the raw amino-acid sequence, 179 residues long: Putative ADP-ribosylation factor-like protein 5C (179 aa).

Gly-2 carries N-myristoyl glycine lipidation. GTP-binding positions include 23 to 30, 66 to 70, and 125 to 128; these read GLDNEGKT, DIVRP, and NKQD.

This sequence belongs to the small GTPase superfamily. Arf family.

Binds and exchanges GTP and GDP. The polypeptide is Putative ADP-ribosylation factor-like protein 5C (ARL5C) (Homo sapiens (Human)).